Reading from the N-terminus, the 503-residue chain is N-fatty-acyl-amino acid synthase/hydrolase PM20D1 (503 aa).

The first 24 residues, 1–24 (MAELLASLPAWAAVLLLFFATVSG), serve as a signal peptide directing secretion. N-linked (GlcNAc...) asparagine glycosylation occurs at Asn72. His125 contributes to the Zn(2+) binding site. Asp127 is an active-site residue. Asp157 provides a ligand contact to Zn(2+). Glu191 (proton acceptor) is an active-site residue. Zn(2+)-binding residues include Glu192 and Asp218. The N-linked (GlcNAc...) asparagine glycan is linked to Asn443. Residue His465 participates in Zn(2+) binding.

It belongs to the peptidase M20A family. The cofactor is Zn(2+). As to expression, in addition to being detected in blood (at protein level), PM20D1 is also highly expressed in other tissues including brown adipocytes, liver and kidney. It is also expressed in small intestine, large intestine, heart and pancreas.

It is found in the secreted. The catalysed reaction is an N-acyl-L-amino acid + H2O = an L-alpha-amino acid + a carboxylate. It catalyses the reaction an N-acyl-aromatic L-alpha-amino acid + H2O = an aromatic L-alpha-amino acid + a carboxylate. It carries out the reaction N-(5Z,8Z,11Z,14Z)-eicosatetraenoyl-glycine + H2O = (5Z,8Z,11Z,14Z)-eicosatetraenoate + glycine. The enzyme catalyses N-hexadecanoyl-L-phenylalanine + H2O = hexadecanoate + L-phenylalanine. The catalysed reaction is N-octadecanoyl-L-phenylalanine + H2O = octadecanoate + L-phenylalanine. It catalyses the reaction N-(4Z,7Z,10Z,13Z,16Z,19Z-docosahexaenoyl)-L-phenylalanine + H2O = (4Z,7Z,10Z,13Z,16Z,19Z)-docosahexaenoate + L-phenylalanine. It carries out the reaction N-(9Z-octadecenoyl)-L-asparagine + H2O = L-asparagine + (9Z)-octadecenoate. The enzyme catalyses (9Z)-octadecenoate + glycine = N-(9Z-octadecenoyl)glycine + H2O. The catalysed reaction is N-(9Z-octadecenoyl)-L-lysine + H2O = L-lysine + (9Z)-octadecenoate. It catalyses the reaction N-(9Z-octadecenoyl)-L-methionine + H2O = (9Z)-octadecenoate + L-methionine. It carries out the reaction N-(9Z-octadecenoyl)-L-serine + H2O = L-serine + (9Z)-octadecenoate. The enzyme catalyses N-(9Z-octadecenoyl)-L-tryptophan + H2O = L-tryptophan + (9Z)-octadecenoate. The catalysed reaction is N-(9Z-octadecenoyl)-L-tyrosine + H2O = L-tyrosine + (9Z)-octadecenoate. It catalyses the reaction N-(9Z-octadecenoyl)-L-glutamine + H2O = L-glutamine + (9Z)-octadecenoate. It carries out the reaction N-(5Z,8Z,11Z,14Z-eicosatetraenoyl)-L-serine + H2O = (5Z,8Z,11Z,14Z)-eicosatetraenoate + L-serine. The enzyme catalyses (5Z,8Z,11Z,14Z)-eicosatetraenoate + L-phenylalanine = N-(5Z,8Z,11Z,14Z-eicosatetraenoyl)-L-phenylalanine + H2O. The catalysed reaction is N-(9Z-octadecenoyl)-L-leucine + H2O = L-leucine + (9Z)-octadecenoate. It catalyses the reaction L-phenylalanine + (9Z)-octadecenoate = N-(9Z-octadecenoyl)-L-phenylalanine + H2O. Its pathway is amino-acid metabolism. It participates in energy metabolism; electron transfer. It functions in the pathway lipid metabolism; fatty acid metabolism. Its activity is regulated as follows. Lipoproteins are powerful coactivators of PM20D1 activity in vitro and NAA biosynthesis in vivo. Functionally, secreted enzyme that regulates the endogenous N-fatty acyl amino acid (NAAs) tissue and circulating levels by functioning as a bidirectional NAA synthase/hydrolase. It condenses free fatty acids and free amino acids to generate NAAs and bidirectionally catalyzes the reverse hydrolysis reaction. Some of these NAAs stimulate oxidative metabolism via mitochondrial uncoupling, increasing energy expenditure in a UPC1-independent manner. Thereby, this secreted protein may indirectly regulate whole body energy expenditure. PM20D1 circulates in tight association with both low- and high-density (LDL and HDL,respectively) lipoprotein particles. In Mus musculus (Mouse), this protein is N-fatty-acyl-amino acid synthase/hydrolase PM20D1.